A 240-amino-acid chain; its full sequence is Putative peptidoglycan hydrolase Rv2525c (240 aa).

The segment at residues methionine 1–alanine 33 is a signal peptide (tat-type signal).

Post-translationally, predicted to be exported by the Tat system. The position of the signal peptide cleavage has not been experimentally proven.

It is found in the secreted. The catalysed reaction is Hydrolysis of (1-&gt;4)-beta-linkages between N-acetylmuramic acid and N-acetyl-D-glucosamine residues in a peptidoglycan and between N-acetyl-D-glucosamine residues in chitodextrins.. It functions in the pathway cell wall degradation; peptidoglycan degradation. In terms of biological role, may function as a peptidoglycan hydrolase with glycosidase activity. In vitro, displays esterase activity toward p-nitrophenyl esters of various acyl chain length (C4 to C16), with a preference for p-nitrophenyl butyrate (C4). This chain is Putative peptidoglycan hydrolase Rv2525c, found in Mycobacterium tuberculosis (strain ATCC 25618 / H37Rv).